Consider the following 356-residue polypeptide: SERTA domain-containing protein 4 (356 aa).

The interval 33–53 is disordered; that stretch reads SYGGPSPPGPAQAPLQGDRGA. The SERTA domain maps to 101–147; it reads IFEERAHILYMSLEKLKFIDDPEVYLRRSVLINNLMKRIHGEIIMQN. Residues 215-232 show a composition bias toward low complexity; sequence TAASSPSASSSSSSSSSS. Disordered stretches follow at residues 215 to 238, 280 to 302, and 332 to 356; these read TAAS…LPLP, KLND…HEPV, and WKKS…GSKI. Over residues 280–292 the composition is skewed to basic and acidic residues; sequence KLNDEKANDDTNR.

This Homo sapiens (Human) protein is SERTA domain-containing protein 4 (SERTAD4).